The primary structure comprises 620 residues: Ferric/cupric reductase transmembrane component 7 (620 aa).

Residues Met1 to Lys45 are Extracellular-facing. Residues Phe46–Met66 form a helical membrane-spanning segment. The Cytoplasmic portion of the chain corresponds to Tyr67–Lys107. A helical transmembrane segment spans residues Phe108 to Val128. At Met129–Ser167 the chain is on the extracellular side. One can recognise a Ferric oxidoreductase domain in the interval Ala161–Gly320. The helical transmembrane segment at Leu168–Leu188 threads the bilayer. Topologically, residues Ser189 to Asn194 are cytoplasmic. A helical membrane pass occupies residues Ile195–Phe215. 2 residues coordinate heme: His197 and His211. Residues Leu216 to Met237 are Extracellular-facing. The chain crosses the membrane as a helical span at residues Trp238–Ile258. At Ala259–Glu265 the chain is on the cytoplasmic side. A helical membrane pass occupies residues Ile266–Val286. Heme is bound by residues His271 and His285. Topologically, residues Tyr287–Ser292 are extracellular. Residues His293–Val313 form a helical membrane-spanning segment. Topologically, residues Lys314–Tyr620 are cytoplasmic. An FAD-binding FR-type domain is found at Arg321–Asp419. His369–Pro375 is a binding site for FAD. The segment at Ser519–Phe544 is disordered. The segment covering Asp523–Glu532 has biased composition (basic and acidic residues).

The protein belongs to the ferric reductase (FRE) family. It depends on FAD as a cofactor.

The protein resides in the cell membrane. It carries out the reaction 2 a Fe(II)-siderophore + NADP(+) + H(+) = 2 a Fe(III)-siderophore + NADPH. Cell surface metalloreductase. May be involved in copper homeostasis. The sequence is that of Ferric/cupric reductase transmembrane component 7 (FRE7) from Saccharomyces cerevisiae (strain YJM789) (Baker's yeast).